We begin with the raw amino-acid sequence, 390 residues long: GTPase Obg (390 aa).

Positions 1 to 159 (MKFVDEAVIR…RHLRLELLLL (159 aa)) constitute an Obg domain. The segment at 22–42 (SFRTEKYVPRGGPDGGDGGDG) is disordered. Gly residues predominate over residues 33–42 (GPDGGDGGDG). The region spanning 160–333 (ADVGMLGLPN…LTYNLMTTIE (174 aa)) is the OBG-type G domain. Residues 166–173 (GLPNAGKS), 191–195 (FTTLI), 213–216 (DIPG), 283–286 (NKVD), and 314–316 (SAL) contribute to the GTP site. Mg(2+)-binding residues include S173 and T193.

The protein belongs to the TRAFAC class OBG-HflX-like GTPase superfamily. OBG GTPase family. Monomer. It depends on Mg(2+) as a cofactor.

Its subcellular location is the cytoplasm. Functionally, an essential GTPase which binds GTP, GDP and possibly (p)ppGpp with moderate affinity, with high nucleotide exchange rates and a fairly low GTP hydrolysis rate. Plays a role in control of the cell cycle, stress response, ribosome biogenesis and in those bacteria that undergo differentiation, in morphogenesis control. The protein is GTPase Obg of Photobacterium profundum (strain SS9).